A 491-amino-acid polypeptide reads, in one-letter code: AP-2 complex subunit mu (491 aa).

3 positions are modified to phosphoserine: Ser-179, Ser-180, and Ser-181. An MHD domain is found at Lys-209–Arg-490.

The protein belongs to the adaptor complexes medium subunit family. Adaptor protein complex 2 (AP-2) is a heterotetramer composed of two large adaptins (alpha-type subunit APL3 and beta-type subunit APL1), a medium chain (mu-type subunit APM4) and a small adaptin (sigma-type subunit APS2).

The protein resides in the membrane. The protein localises to the clathrin-coated pit. It localises to the cytoplasmic vesicle. Its subcellular location is the clathrin-coated vesicle membrane. Functionally, component of the adaptor complexes which link clathrin to receptors in coated vesicles. Clathrin-associated protein complexes are believed to interact with the cytoplasmic tails of membrane proteins, leading to their selection and concentration. The sequence is that of AP-2 complex subunit mu (APM4) from Saccharomyces cerevisiae (strain ATCC 204508 / S288c) (Baker's yeast).